The chain runs to 181 residues: MRLVLLGPPGAGKGTQAAILSEKFGVPHISTGDLFRANIGQATALGVEAKKYIDAGELVPSSITNDMVKARVAEPDAANGFLLDGFPRSVEQAQALEGILKDLDTRLDGVLSFVVDEDIVVERMLARGRADDTEDVIRNRLRVYRDETSPLFDYYKDSIVSVDAIGEVEEVNARALAALGK.

G10 to T15 is a binding site for ATP. The NMP stretch occupies residues S30–V59. AMP-binding positions include T31, R36, E57 to V59, G85 to R88, and Q92. The interval A126–D132 is LID. Residue R127 participates in ATP binding. Residues R129 and R140 each coordinate AMP. G166 contacts ATP.

The protein belongs to the adenylate kinase family. As to quaternary structure, monomer.

The protein localises to the cytoplasm. It catalyses the reaction AMP + ATP = 2 ADP. It participates in purine metabolism; AMP biosynthesis via salvage pathway; AMP from ADP: step 1/1. In terms of biological role, catalyzes the reversible transfer of the terminal phosphate group between ATP and AMP. Plays an important role in cellular energy homeostasis and in adenine nucleotide metabolism. This is Adenylate kinase from Rhodococcus erythropolis (strain PR4 / NBRC 100887).